We begin with the raw amino-acid sequence, 145 residues long: Basic phospholipase A2 PC10 (145 aa).

The first 21 residues, 1–21 (MYPAHLLLLLAVCVSLLGASA), serve as a signal peptide directing secretion. A propeptide spanning residues 22–27 (IPPLPL) is cleaved from the precursor. Cystine bridges form between Cys-38-Cys-98, Cys-54-Cys-144, Cys-56-Cys-72, Cys-71-Cys-125, Cys-78-Cys-118, Cys-87-Cys-111, and Cys-105-Cys-116. Tyr-55, Gly-57, and Gly-59 together coordinate Ca(2+). His-75 is an active-site residue. Asp-76 is a Ca(2+) binding site. Asp-119 is a catalytic residue.

This sequence belongs to the phospholipase A2 family. Group I subfamily. D49 sub-subfamily. The cofactor is Ca(2+).

Its subcellular location is the secreted. The enzyme catalyses a 1,2-diacyl-sn-glycero-3-phosphocholine + H2O = a 1-acyl-sn-glycero-3-phosphocholine + a fatty acid + H(+). Its function is as follows. PLA2 catalyzes the calcium-dependent hydrolysis of the 2-acyl groups in 3-sn-phosphoglycerides. The sequence is that of Basic phospholipase A2 PC10 from Laticauda laticaudata (Blue-ringed sea krait).